The chain runs to 190 residues: ATP synthase subunit b, chloroplastic (190 aa).

The helical transmembrane segment at 35–55 (LSVVLGVLIFFGKGVCASCLL) threads the bilayer.

Belongs to the ATPase B chain family. As to quaternary structure, F-type ATPases have 2 components, F(1) - the catalytic core - and F(0) - the membrane proton channel. F(1) has five subunits: alpha(3), beta(3), gamma(1), delta(1), epsilon(1). F(0) has four main subunits: a(1), b(1), b'(1) and c(10-14). The alpha and beta chains form an alternating ring which encloses part of the gamma chain. F(1) is attached to F(0) by a central stalk formed by the gamma and epsilon chains, while a peripheral stalk is formed by the delta, b and b' chains.

The protein localises to the plastid. The protein resides in the chloroplast thylakoid membrane. F(1)F(0) ATP synthase produces ATP from ADP in the presence of a proton or sodium gradient. F-type ATPases consist of two structural domains, F(1) containing the extramembraneous catalytic core and F(0) containing the membrane proton channel, linked together by a central stalk and a peripheral stalk. During catalysis, ATP synthesis in the catalytic domain of F(1) is coupled via a rotary mechanism of the central stalk subunits to proton translocation. In terms of biological role, component of the F(0) channel, it forms part of the peripheral stalk, linking F(1) to F(0). This is ATP synthase subunit b, chloroplastic from Coffea arabica (Arabian coffee).